Reading from the N-terminus, the 612-residue chain is uncharacterized protein (612 aa).

The interval 171–217 (MLPPSLVQRNNATTSPTTDSASENNESVPSLTSSVSTSSSVYSSWNP) is disordered. A compositionally biased stretch (polar residues) spans 177 to 196 (VQRNNATTSPTTDSASENNE). Residues 197–214 (SVPSLTSSVSTSSSVYSS) are compositionally biased toward low complexity.

To yeast YNL018c.

This is an uncharacterized protein from Saccharomyces cerevisiae (strain ATCC 204508 / S288c) (Baker's yeast).